Consider the following 161-residue polypeptide: Large ribosomal subunit protein bL9 (161 aa).

It belongs to the bacterial ribosomal protein bL9 family.

Functionally, binds to the 23S rRNA. The polypeptide is Large ribosomal subunit protein bL9 (Blochmanniella floridana).